We begin with the raw amino-acid sequence, 542 residues long: MEVREISLAATTPLATDYINGTFPIEKGFSYSLQAEDVFWRRLDDIKGRAYPRRELVEYLRSYHQRFHASSETFYNIEKLLHPESVVVVGGQQAGLLTGPLYTIYKIISVIKLAKEQERKLGVPVVPLFWIAGEDHDIAEVNHVYIAEDGKIKKYVYPDIPQEKRMVSDVPLDHQVCSTWITNIVKTYGETETTNKLLDFLFQCLDQSKTFVDFFASIVLRLFASEGLVVLNAADVPLRAIESSFFTALIECHREVTDAVLRKQHQLRQLGYKNTLDIQPHCANLFYYDGRQRWLLEHDPQKEVFHSKKGEFVFSKDELIQLAKTKPGHLSNNVVTRPLMQEFLLPTLAFVAGPGEIAYWAELKEAFSIFGFKMPPVIPRVNITIVERSIQTDLAEIGIDIMDVFKGRLEEAKQQWLAQQTRYPLEEMFAKAKAEIEEIHRPLREFGMEIDRGLAGLLTKNATLLQAQIDFLHQTLQRALIRKYEVELRKFSRVEMSLMPNQAPQERIWNIFYYINKYGFDFLEKLLQLDYKWNGMHKIVYI.

A coiled-coil region spans residues 458–479 (LTKNATLLQAQIDFLHQTLQRA).

This sequence belongs to the BshC family.

Involved in bacillithiol (BSH) biosynthesis. May catalyze the last step of the pathway, the addition of cysteine to glucosamine malate (GlcN-Mal) to generate BSH. In Geobacillus sp. (strain WCH70), this protein is Putative cysteine ligase BshC.